The following is a 421-amino-acid chain: Testin (421 aa).

The PET domain maps to 92 to 199 (MILTNPVAAK…GDVKLPCEMD (108 aa)). The tract at residues 133-164 (EKQPVAGSEGAQYRKKQLAKQLPAHDQDPSKC) is disordered. Over residues 155-164 (PAHDQDPSKC) the composition is skewed to basic and acidic residues. LIM zinc-binding domains lie at 234-297 (YSCY…CDSE), 299-359 (PRCA…NHAV), and 362-421 (QGCH…KMMS).

Belongs to the prickle / espinas / testin family. As to quaternary structure, interacts via LIM domain 1 with ZYX. Interacts (via LIM domain 3) with ENAH and VASP. Interacts with ALKBH4, talin, actin, alpha-actinin, GRIP1 and PXN. Interacts (via LIM domain 2) with ACTL7A (via N-terminus). Heterodimer with ACTL7A; the heterodimer interacts with ENAH to form a heterotrimer.

It localises to the cytoplasm. The protein resides in the cell junction. It is found in the focal adhesion. Its function is as follows. Scaffold protein that may play a role in cell adhesion, cell spreading and in the reorganization of the actin cytoskeleton. Plays a role in the regulation of cell proliferation. May act as a tumor suppressor. In Saimiri boliviensis boliviensis (Bolivian squirrel monkey), this protein is Testin (TES).